We begin with the raw amino-acid sequence, 337 residues long: MSQVTARVLNSGMRLPPLPTIRELVKLYKLQAMKQLSQNFLMDERLTDKIVKSAGRIDPRDIVLEVGPGPGGITRSILRRQPQRLILVEKDRRFGETLQLLRECASPLDMQVDIYYDDILRFNIEQHIPDTTQRIHLIGNLPFSISTRLLINWYADLAARRGAFRRNDTCMTLTFQKEVAERICAPVGSEQRCRLSVMSQIWTEPVMKFIIPGKAFVPKPQVDVGVVKLIPLKQPKTQLPFSLVERVVRHIFSMRQKYCRRGYGTLLPPDSREETTQTLFQRADVRDTLRSFELSVPQCLRLADAYAEYIKEHPEVEAYDYRGPKNPDVSGAAAASS.

The N-terminal 84 residues, 1–84, are a transit peptide targeting the mitochondrion; it reads MSQVTARVLN…RSILRRQPQR (84 aa). S-adenosyl-L-methionine contacts are provided by residues 38–41, asparagine 39, leucine 41, glycine 67, glutamate 89, aspartate 118, and asparagine 140; that span reads QNFL.

It belongs to the class I-like SAM-binding methyltransferase superfamily. rRNA adenine N(6)-methyltransferase family. KsgA subfamily.

The protein resides in the mitochondrion. Its function is as follows. Probable S-adenosyl-L-methionine-dependent methyltransferase which specifically dimethylates mitochondrial 12S rRNA at the conserved stem loop. The chain is Dimethyladenosine transferase 1, mitochondrial (mtTFB1) from Drosophila pseudoobscura pseudoobscura (Fruit fly).